Here is a 184-residue protein sequence, read N- to C-terminus: MKNVTDSFVSLGHWPSAGSFGFNTDILATNLINLSVVLGVLIFFGKGVLSDLLDNRKQRILNTIRNSEELREGAIEQLEKARARLRKIEIEADEFRVNGYSEIEREKLNLIDSTYKTLEQLENYKNETINFEQQKASNQVRQRVFQQALQGALGTLNSCLNNELHLRTISANIGILAAMKQITD.

A helical transmembrane segment spans residues 27 to 49 (LATNLINLSVVLGVLIFFGKGVL).

It belongs to the ATPase B chain family. As to quaternary structure, F-type ATPases have 2 components, F(1) - the catalytic core - and F(0) - the membrane proton channel. F(1) has five subunits: alpha(3), beta(3), gamma(1), delta(1), epsilon(1). F(0) has four main subunits: a(1), b(1), b'(1) and c(10-14). The alpha and beta chains form an alternating ring which encloses part of the gamma chain. F(1) is attached to F(0) by a central stalk formed by the gamma and epsilon chains, while a peripheral stalk is formed by the delta, b and b' chains.

Its subcellular location is the plastid. It localises to the chloroplast thylakoid membrane. Its function is as follows. F(1)F(0) ATP synthase produces ATP from ADP in the presence of a proton or sodium gradient. F-type ATPases consist of two structural domains, F(1) containing the extramembraneous catalytic core and F(0) containing the membrane proton channel, linked together by a central stalk and a peripheral stalk. During catalysis, ATP synthesis in the catalytic domain of F(1) is coupled via a rotary mechanism of the central stalk subunits to proton translocation. Functionally, component of the F(0) channel, it forms part of the peripheral stalk, linking F(1) to F(0). The polypeptide is ATP synthase subunit b, chloroplastic (Helianthus annuus (Common sunflower)).